The chain runs to 354 residues: MQVYVDYRDVNSISNKKTLAYVNNFVINTTQFLNRFNYLCEQKLCDISNHLQKLEITMSLLEIKLGSIDGLESLPSSANVPVHNTQPTTQQNTPPPPTAAATTSSNIPPPPPPPPPPMTGVPPPPPPPPPPPISKSNIPPPPATQQNTQESDDDDEDNNNNDKNNNNRDDEDDDDETSSQAPPPPPMPTLPSSQSLMDNLAAVLAMKKQQRNPQPPQPQPQSPSPQPPPPPTTTSSIPVPPPPFSGANNNSDDDDDDDEGPSLSIPAPPSMMVMSGNNNSNSNSYSNNNNNKDDDDDDDDDDDDDDNSISIPKPPQMDDIMIPAPPTDLFIPAPPSIRNYDDADDDDDDDDESW.

A disordered region spans residues 76–354 (SSANVPVHNT…DDDDDDDESW (279 aa)). Positions 107 to 143 (IPPPPPPPPPPMTGVPPPPPPPPPPPISKSNIPPPPA) are enriched in pro residues. A compositionally biased stretch (acidic residues) spans 150–159 (ESDDDDEDNN). Residues 213-244 (PQPPQPQPQSPSPQPPPPPTTTSSIPVPPPPF) show a composition bias toward pro residues. Positions 251–260 (SDDDDDDDEG) are enriched in acidic residues. Over residues 277–290 (NNNSNSNSYSNNNN) the composition is skewed to low complexity. Acidic residues-rich tracts occupy residues 293–307 (DDDDDDDDDDDDDDN) and 342–354 (DADDDDDDDDESW).

Belongs to the CCDC53 family. In terms of assembly, probable component of the WASH complex.

The protein is WASH complex subunit 3 of Dictyostelium discoideum (Social amoeba).